We begin with the raw amino-acid sequence, 75 residues long: Transaldolase (75 aa).

This sequence belongs to the transaldolase family. Type 1 subfamily. As to quaternary structure, homodimer. In terms of processing, phosphorylated. Predominantly expressed in Y-organs.

Its subcellular location is the cytoplasm. It catalyses the reaction D-sedoheptulose 7-phosphate + D-glyceraldehyde 3-phosphate = D-erythrose 4-phosphate + beta-D-fructose 6-phosphate. It participates in carbohydrate degradation; pentose phosphate pathway; D-glyceraldehyde 3-phosphate and beta-D-fructose 6-phosphate from D-ribose 5-phosphate and D-xylulose 5-phosphate (non-oxidative stage): step 2/3. Transaldolase is important for the balance of metabolites in the pentose-phosphate pathway. May play a role in the conversion of sterols into ecdysteroids via NADPH. The polypeptide is Transaldolase (Carcinus maenas (Common shore crab)).